The following is a 129-amino-acid chain: Follitropin subunit beta (129 aa).

Positions 1–20 are cleaved as a signal peptide; sequence MKSVQLCFLFCCWRAICCKS. 6 disulfide bridges follow: C21/C69, C35/C84, C38/C122, C46/C100, C50/C102, and C105/C112. Residues N25 and N42 are each glycosylated (N-linked (GlcNAc...) asparagine).

This sequence belongs to the glycoprotein hormones subunit beta family. In terms of assembly, heterodimer. The active follitropin is a heterodimer composed of an alpha chain/CGA shared with other hormones and a unique beta chain/FSHB shown here.

Its subcellular location is the secreted. Functionally, together with the alpha chain CGA constitutes follitropin, the follicle-stimulating hormone, and provides its biological specificity to the hormone heterodimer. Binds FSHR, a G protein-coupled receptor, on target cells to activate downstream signaling pathways. Follitropin is involved in follicle development and spermatogenesis in reproductive organs. The sequence is that of Follitropin subunit beta (FSHB) from Ailuropoda melanoleuca (Giant panda).